Reading from the N-terminus, the 418-residue chain is Probable mitochondrial adenine nucleotide transporter BTL2 (418 aa).

3 Solcar repeats span residues 122–205 (MNTR…YRKQ), 215–300 (ATNF…LKSS), and 329–414 (LGPI…MKIV). 6 consecutive transmembrane segments (helical) span residues 127–147 (HLWA…PLER), 180–200 (GNLL…CAYD), 221–241 (FVAG…LDTI), 276–296 (LVPS…VYDI), 335–355 (LMYG…FEVV), and 383–403 (IPAL…SASI).

It belongs to the mitochondrial carrier (TC 2.A.29) family.

The protein resides in the mitochondrion inner membrane. Its function is as follows. Probable mitochondrial adenylate carrier that catalyzes the transport of ATP, ADP and AMP. This Arabidopsis thaliana (Mouse-ear cress) protein is Probable mitochondrial adenine nucleotide transporter BTL2.